We begin with the raw amino-acid sequence, 343 residues long: GTP 3',8-cyclase (343 aa).

One can recognise a Radical SAM core domain in the interval 19-244; it reads PFGRNISYLR…TDLDDSTGGP (226 aa). A GTP-binding site is contributed by Arg-28. Residues Cys-35 and Cys-39 each contribute to the [4Fe-4S] cluster site. Tyr-41 contacts S-adenosyl-L-methionine. A [4Fe-4S] cluster-binding site is contributed by Cys-42. Residue Arg-77 participates in GTP binding. Gly-81 contributes to the S-adenosyl-L-methionine binding site. A GTP-binding site is contributed by Thr-111. An S-adenosyl-L-methionine-binding site is contributed by Ser-135. A GTP-binding site is contributed by Lys-171. Met-205 is an S-adenosyl-L-methionine binding site. Cys-268 and Cys-271 together coordinate [4Fe-4S] cluster. Residue 273 to 275 coordinates GTP; that stretch reads RVR. Cys-285 is a [4Fe-4S] cluster binding site.

Belongs to the radical SAM superfamily. MoaA family. As to quaternary structure, monomer and homodimer. [4Fe-4S] cluster is required as a cofactor.

The enzyme catalyses GTP + AH2 + S-adenosyl-L-methionine = (8S)-3',8-cyclo-7,8-dihydroguanosine 5'-triphosphate + 5'-deoxyadenosine + L-methionine + A + H(+). It functions in the pathway cofactor biosynthesis; molybdopterin biosynthesis. Its function is as follows. Catalyzes the cyclization of GTP to (8S)-3',8-cyclo-7,8-dihydroguanosine 5'-triphosphate. In Nitrobacter winogradskyi (strain ATCC 25391 / DSM 10237 / CIP 104748 / NCIMB 11846 / Nb-255), this protein is GTP 3',8-cyclase.